The chain runs to 364 residues: tRNA/tmRNA (uracil-C(5))-methyltransferase (364 aa).

Residues glutamine 188, tyrosine 216, asparagine 221, glutamate 237, and aspartate 297 each coordinate S-adenosyl-L-methionine. The Nucleophile role is filled by cysteine 322. Glutamate 356 functions as the Proton acceptor in the catalytic mechanism.

It belongs to the class I-like SAM-binding methyltransferase superfamily. RNA M5U methyltransferase family. TrmA subfamily.

The enzyme catalyses uridine(54) in tRNA + S-adenosyl-L-methionine = 5-methyluridine(54) in tRNA + S-adenosyl-L-homocysteine + H(+). The catalysed reaction is uridine(341) in tmRNA + S-adenosyl-L-methionine = 5-methyluridine(341) in tmRNA + S-adenosyl-L-homocysteine + H(+). Dual-specificity methyltransferase that catalyzes the formation of 5-methyluridine at position 54 (m5U54) in all tRNAs, and that of position 341 (m5U341) in tmRNA (transfer-mRNA). The chain is tRNA/tmRNA (uracil-C(5))-methyltransferase from Colwellia psychrerythraea (strain 34H / ATCC BAA-681) (Vibrio psychroerythus).